Reading from the N-terminus, the 572-residue chain is Pentatricopeptide repeat-containing protein At5g15010, mitochondrial (572 aa).

A mitochondrion-targeting transit peptide spans 1-57 (MRGIFLIRSRLSIFRAPAVKCLRFSNVLPSLSNNCIVRLYMEPPVACVLPLGLCSMF). 10 PPR repeats span residues 160–194 (SVRE…SPSL), 196–230 (NSQT…KLEM), 231–261 (GIDD…NKDK), 265–300 (DAKS…GVKH), 301–335 (DVVS…CIEP), 336–371 (DRKV…GIEP), 372–406 (NVVT…GLFP), 412–438 (HAFM…GCEP), 439–473 (TVET…TVGP), and 474–508 (DLSS…GMRP).

It belongs to the PPR family. P subfamily.

It localises to the mitochondrion. This chain is Pentatricopeptide repeat-containing protein At5g15010, mitochondrial, found in Arabidopsis thaliana (Mouse-ear cress).